Reading from the N-terminus, the 148-residue chain is D-aminoacyl-tRNA deacylase (148 aa).

The short motif at 137–138 (GP) is the Gly-cisPro motif, important for rejection of L-amino acids element.

It belongs to the DTD family. Homodimer.

It is found in the cytoplasm. The enzyme catalyses glycyl-tRNA(Ala) + H2O = tRNA(Ala) + glycine + H(+). It catalyses the reaction a D-aminoacyl-tRNA + H2O = a tRNA + a D-alpha-amino acid + H(+). In terms of biological role, an aminoacyl-tRNA editing enzyme that deacylates mischarged D-aminoacyl-tRNAs. Also deacylates mischarged glycyl-tRNA(Ala), protecting cells against glycine mischarging by AlaRS. Acts via tRNA-based rather than protein-based catalysis; rejects L-amino acids rather than detecting D-amino acids in the active site. By recycling D-aminoacyl-tRNA to D-amino acids and free tRNA molecules, this enzyme counteracts the toxicity associated with the formation of D-aminoacyl-tRNA entities in vivo and helps enforce protein L-homochirality. This Lactiplantibacillus plantarum (strain ATCC BAA-793 / NCIMB 8826 / WCFS1) (Lactobacillus plantarum) protein is D-aminoacyl-tRNA deacylase.